The following is a 398-amino-acid chain: Methionine import ATP-binding protein MetN 2 (398 aa).

In terms of domain architecture, ABC transporter spans 43 to 282; the sequence is VSLEQVGKVF…PRHGATRALL (240 aa). Residue 79-86 participates in ATP binding; sequence GRSGAGKS.

Belongs to the ABC transporter superfamily. Methionine importer (TC 3.A.1.24) family. As to quaternary structure, the complex is composed of two ATP-binding proteins (MetN), two transmembrane proteins (MetI) and a solute-binding protein (MetQ).

It localises to the cell inner membrane. The enzyme catalyses L-methionine(out) + ATP + H2O = L-methionine(in) + ADP + phosphate + H(+). It carries out the reaction D-methionine(out) + ATP + H2O = D-methionine(in) + ADP + phosphate + H(+). Part of the ABC transporter complex MetNIQ involved in methionine import. Responsible for energy coupling to the transport system. This is Methionine import ATP-binding protein MetN 2 from Burkholderia lata (strain ATCC 17760 / DSM 23089 / LMG 22485 / NCIMB 9086 / R18194 / 383).